A 31-amino-acid chain; its full sequence is Protein YmiC (31 aa).

Residues 9–29 (WSWMGAFSLSMLFWAELLWII) traverse the membrane as a helical segment.

It localises to the cell inner membrane. In Escherichia coli (strain K12), this protein is Protein YmiC.